The following is a 121-amino-acid chain: Small ribosomal subunit protein uS13 (121 aa).

Residues R93–K121 are disordered.

This sequence belongs to the universal ribosomal protein uS13 family. Part of the 30S ribosomal subunit. Forms a loose heterodimer with protein S19. Forms two bridges to the 50S subunit in the 70S ribosome.

Functionally, located at the top of the head of the 30S subunit, it contacts several helices of the 16S rRNA. In the 70S ribosome it contacts the 23S rRNA (bridge B1a) and protein L5 of the 50S subunit (bridge B1b), connecting the 2 subunits; these bridges are implicated in subunit movement. Contacts the tRNAs in the A and P-sites. This chain is Small ribosomal subunit protein uS13, found in Paracidovorax citrulli (strain AAC00-1) (Acidovorax citrulli).